The following is a 418-amino-acid chain: Putative ion-transport protein YfeO (418 aa).

The next 12 membrane-spanning stretches (helical) occupy residues 10–30 (LLLSLPAVAIGIASSLILIVV), 54–74 (DSPLWIIGVLTLTGIAVGLVI), 99–119 (ALPGLIVALILGLAGGVSLGP), 120–140 (EHPIMTVNIALAVAIGARLLP), 149–169 (ILASAGTIGALFGTPVAAALI), 186–206 (LFAPLMAAAAGALTTGLFFHP), 223–243 (ILSGAIVAAIAIAAGMVAVWC), 258–278 (VLVLGIGGFILGILGVIGGPV), 300–320 (DYFLLAVIKLAALVVAAASGF), 322–342 (GGRIFPAVFVGVALGLMLHEH), 343–363 (VPAVPAAITVSCAILGIVLVV), and 371–391 (LFMAAVVVPNTTLLPLLCIVM).

This sequence belongs to the chloride channel (TC 2.A.49) family.

It localises to the cell membrane. This is Putative ion-transport protein YfeO from Escherichia coli O9:H4 (strain HS).